We begin with the raw amino-acid sequence, 155 residues long: Ribosome maturation factor RimP (155 aa).

Belongs to the RimP family.

It localises to the cytoplasm. Required for maturation of 30S ribosomal subunits. The polypeptide is Ribosome maturation factor RimP (Maridesulfovibrio salexigens (strain ATCC 14822 / DSM 2638 / NCIMB 8403 / VKM B-1763) (Desulfovibrio salexigens)).